A 527-amino-acid polypeptide reads, in one-letter code: Baeyer-Villiger monooxygenase (527 aa).

Residues Ser36, Glu56, 64–67, Asp76, Tyr82, and Ile125 each bind FAD; that span reads TWRV. 74 to 76 contributes to the NADP(+) binding site; the sequence is ACD. NADP(+) is bound by residues 199 to 205, 222 to 223, and 308 to 309; these read TGASAIQ, RT, and KR. Residue Met415 participates in FAD binding.

Belongs to the FAD-binding monooxygenase family. FAD serves as cofactor.

In terms of biological role, catalyzes a Baeyer-Villiger oxidation reaction, i.e. the insertion of an oxygen atom into a carbon-carbon bond adjacent to a carbonyl, which converts ketones to esters or lactones using NADPH and/or NADH as an electron donor. Thus, can convert bicyclo[3.2.0]hept-2-en-6-one into the oxidative lactone products 2-oxabicyclo[3.3.0]oct-6-en-3-one and 3-oxabicyclo[3.3.0]oct-6-en-2-one. Is also able to catalyze the sulfoxidation of methyl phenyl sulfide (thioanisole). The protein is Baeyer-Villiger monooxygenase of Pseudomonas aeruginosa (strain ATCC 15692 / DSM 22644 / CIP 104116 / JCM 14847 / LMG 12228 / 1C / PRS 101 / PAO1).